The primary structure comprises 190 residues: Probable oligoribonuclease (190 aa).

Positions 19-181 (MVWVDLEMTG…QDIEESIEEL (163 aa)) constitute an Exonuclease domain. The active site involves Y140.

This sequence belongs to the oligoribonuclease family.

Functionally, 3'-to-5' exoribonuclease specific for small oligoribonucleotides. The sequence is that of Probable oligoribonuclease (rexo2-1) from Dictyostelium discoideum (Social amoeba).